The primary structure comprises 430 residues: 3-phosphoshikimate 1-carboxyvinyltransferase (430 aa).

Residues K21, S22, and R26 each contribute to the 3-phosphoshikimate site. K21 lines the phosphoenolpyruvate pocket. G94 and R122 together coordinate phosphoenolpyruvate. 4 residues coordinate 3-phosphoshikimate: S167, Q169, D317, and K344. Q169 lines the phosphoenolpyruvate pocket. D317 (proton acceptor) is an active-site residue. Residues R348 and R390 each contribute to the phosphoenolpyruvate site.

It belongs to the EPSP synthase family. In terms of assembly, monomer.

It localises to the cytoplasm. It carries out the reaction 3-phosphoshikimate + phosphoenolpyruvate = 5-O-(1-carboxyvinyl)-3-phosphoshikimate + phosphate. It functions in the pathway metabolic intermediate biosynthesis; chorismate biosynthesis; chorismate from D-erythrose 4-phosphate and phosphoenolpyruvate: step 6/7. Functionally, catalyzes the transfer of the enolpyruvyl moiety of phosphoenolpyruvate (PEP) to the 5-hydroxyl of shikimate-3-phosphate (S3P) to produce enolpyruvyl shikimate-3-phosphate and inorganic phosphate. The sequence is that of 3-phosphoshikimate 1-carboxyvinyltransferase from Thermodesulfovibrio yellowstonii (strain ATCC 51303 / DSM 11347 / YP87).